A 433-amino-acid polypeptide reads, in one-letter code: ATP-dependent protease ATPase subunit HslU (433 aa).

Residues Val-18, 60 to 65 (GVGKTE), Asp-246, Glu-311, and Arg-383 contribute to the ATP site.

Belongs to the ClpX chaperone family. HslU subfamily. As to quaternary structure, a double ring-shaped homohexamer of HslV is capped on each side by a ring-shaped HslU homohexamer. The assembly of the HslU/HslV complex is dependent on binding of ATP.

The protein resides in the cytoplasm. ATPase subunit of a proteasome-like degradation complex; this subunit has chaperone activity. The binding of ATP and its subsequent hydrolysis by HslU are essential for unfolding of protein substrates subsequently hydrolyzed by HslV. HslU recognizes the N-terminal part of its protein substrates and unfolds these before they are guided to HslV for hydrolysis. The polypeptide is ATP-dependent protease ATPase subunit HslU (Rhodopseudomonas palustris (strain HaA2)).